Here is a 196-residue protein sequence, read N- to C-terminus: HTH-type transcriptional regulator UidR (196 aa).

The HTH tetR-type domain maps to 10-70 (QPTRTRILNA…AIILQDQERA (61 aa)). The segment at residues 33–52 (SMKAICKSCAISPGTLYHHF) is a DNA-binding region (H-T-H motif).

In terms of biological role, repressor for the uidRABC (gusRABC) operon. The sequence is that of HTH-type transcriptional regulator UidR (uidR) from Escherichia coli O157:H7.